Here is a 139-residue protein sequence, read N- to C-terminus: Small integral membrane protein 34 (139 aa).

Residues 46–66 (GTSAAWYILTIIGIYAVIFVF) traverse the membrane as a helical segment.

Its subcellular location is the membrane. This chain is Small integral membrane protein 34, found in Homo sapiens (Human).